A 145-amino-acid chain; its full sequence is uncharacterized protein (145 aa).

Residues 1 to 41 (MEQHYHQQNQLRQLKQQQLKELLQQQSKDKEEDEQKHDDYR) adopt a coiled-coil conformation. The segment at 1 to 91 (MEQHYHQQNQ…LQISEPEGES (91 aa)) is disordered. Residues 7-26 (QQNQLRQLKQQQLKELLQQQ) show a composition bias toward low complexity. Positions 27-42 (SKDKEEDEQKHDDYRS) are enriched in basic and acidic residues. The span at 43–58 (PTKTTTTTATSTSAAT) shows a compositional bias: low complexity.

This is an uncharacterized protein from Dictyostelium discoideum (Social amoeba).